The sequence spans 422 residues: UDP-N-acetylglucosamine 1-carboxyvinyltransferase (422 aa).

Position 22 to 23 (22 to 23 (KN)) interacts with phosphoenolpyruvate. Residue Arg93 participates in UDP-N-acetyl-alpha-D-glucosamine binding. Catalysis depends on Cys117, which acts as the Proton donor. Cys117 bears the 2-(S-cysteinyl)pyruvic acid O-phosphothioketal mark. Residues 122-126 (RPVDQ), Asp305, and Ile327 each bind UDP-N-acetyl-alpha-D-glucosamine.

Belongs to the EPSP synthase family. MurA subfamily.

The protein localises to the cytoplasm. The catalysed reaction is phosphoenolpyruvate + UDP-N-acetyl-alpha-D-glucosamine = UDP-N-acetyl-3-O-(1-carboxyvinyl)-alpha-D-glucosamine + phosphate. It participates in cell wall biogenesis; peptidoglycan biosynthesis. Its function is as follows. Cell wall formation. Adds enolpyruvyl to UDP-N-acetylglucosamine. In Bordetella petrii (strain ATCC BAA-461 / DSM 12804 / CCUG 43448), this protein is UDP-N-acetylglucosamine 1-carboxyvinyltransferase.